The chain runs to 209 residues: 3-demethoxyubiquinol 3-hydroxylase (209 aa).

Fe cation-binding residues include E58, E88, H91, E140, E172, and H175.

It belongs to the COQ7 family. Fe cation serves as cofactor.

The protein localises to the cell membrane. The enzyme catalyses a 5-methoxy-2-methyl-3-(all-trans-polyprenyl)benzene-1,4-diol + AH2 + O2 = a 3-demethylubiquinol + A + H2O. Its pathway is cofactor biosynthesis; ubiquinone biosynthesis. Catalyzes the hydroxylation of 2-nonaprenyl-3-methyl-6-methoxy-1,4-benzoquinol during ubiquinone biosynthesis. The sequence is that of 3-demethoxyubiquinol 3-hydroxylase from Polynucleobacter asymbioticus (strain DSM 18221 / CIP 109841 / QLW-P1DMWA-1) (Polynucleobacter necessarius subsp. asymbioticus).